The chain runs to 467 residues: UPF0236 protein TTE0033/TTE0744/TTE0838/TTE0852/TTE1082/TTE1247/TTE1519/TTE1678/TTE1739/TTE1823/TTE2212 (467 aa).

Belongs to the UPF0236 family.

The polypeptide is UPF0236 protein TTE0033/TTE0744/TTE0838/TTE0852/TTE1082/TTE1247/TTE1519/TTE1678/TTE1739/TTE1823/TTE2212 (Caldanaerobacter subterraneus subsp. tengcongensis (strain DSM 15242 / JCM 11007 / NBRC 100824 / MB4) (Thermoanaerobacter tengcongensis)).